Here is a 259-residue protein sequence, read N- to C-terminus: Probable WRKY transcription factor 65 (259 aa).

A compositionally biased stretch (basic and acidic residues) spans 1–17 (MKRGLDMARSYNDHESS). Disordered stretches follow at residues 1-101 (MKRG…RCSS) and 126-165 (TSEH…EEED). Positions 18–31 (QETGPESPNSSTFN) are enriched in polar residues. A compositionally biased stretch (basic and acidic residues) spans 47 to 69 (RSVEKRVVNVPMKEMEGSRHKGD). A DNA-binding region (WRKY) is located at residues 68–134 (GDTTPPSDSW…YTSEHNHPWP (67 aa)). Residues 154–165 (EPEVEPEAEEED) are compositionally biased toward acidic residues.

The protein resides in the nucleus. Its function is as follows. Transcription factor. Interacts specifically with the W box (5'-(T)TGAC[CT]-3'), a frequently occurring elicitor-responsive cis-acting element. The polypeptide is Probable WRKY transcription factor 65 (WRKY65) (Arabidopsis thaliana (Mouse-ear cress)).